Reading from the N-terminus, the 447-residue chain is Histidine--tRNA ligase (447 aa).

This sequence belongs to the class-II aminoacyl-tRNA synthetase family. Homodimer.

The protein localises to the cytoplasm. It catalyses the reaction tRNA(His) + L-histidine + ATP = L-histidyl-tRNA(His) + AMP + diphosphate + H(+). This chain is Histidine--tRNA ligase (hisS), found in Synechocystis sp. (strain ATCC 27184 / PCC 6803 / Kazusa).